The primary structure comprises 839 residues: Taste receptor type 1 member 2 (839 aa).

The signal sequence occupies residues 1–19; that stretch reads MGTRATTICSLFFLLWVLA. Residues 20–566 lie on the Extracellular side of the membrane; it reads EPAENSDFYL…VFLEWHEAPT (547 aa). Residues N84, N248, N292, N312, N368, N407, N428, N487, and N527 are each glycosylated (N-linked (GlcNAc...) asparagine). Residues 567–587 form a helical membrane-spanning segment; the sequence is IAVALLAALGFLSTLAILVIF. Topologically, residues 588–602 are cytoplasmic; that stretch reads WRHFQTPIVRSAGGP. Residues 603–623 traverse the membrane as a helical segment; the sequence is MCFLMLTLLLVAYMVVPVYVG. The Extracellular portion of the chain corresponds to 624 to 635; it reads PPKVSTCLCRQA. Residues 636 to 656 form a helical membrane-spanning segment; it reads LFPLCFTICISCIAVRSFQIV. Over 657–681 the chain is Cytoplasmic; it reads CAFKMASRFPRAYSYWVRYQGPYVS. Residues 682–702 form a helical membrane-spanning segment; that stretch reads MAFITVLKMVIVVIGMLATGL. At 703-727 the chain is on the extracellular side; it reads SPTTRTDPDDPKITIVSCNPNYRNS. A helical membrane pass occupies residues 728–748; the sequence is LLFNTSLDLLLSVVGFSFAYM. Topologically, residues 749 to 760 are cytoplasmic; the sequence is GKELPTNYNEAK. Residues 761-781 form a helical membrane-spanning segment; that stretch reads FITLSMTFYFTSSVSLCTFMS. Topologically, residues 782 to 784 are extracellular; sequence AYS. Residues 785–805 traverse the membrane as a helical segment; it reads GVLVTIVDLLVTVLNLLAISL. Residues 806–839 lie on the Cytoplasmic side of the membrane; it reads GYFGPKCYMILFYPERNTPAYFNSMIQGYTMRRD.

The protein belongs to the G-protein coupled receptor 3 family. TAS1R subfamily. Forms heterodimers with TAS1R3.

The protein resides in the cell membrane. Its function is as follows. Putative taste receptor. TAS1R2/TAS1R3 recognizes diverse natural and synthetic sweeteners. The chain is Taste receptor type 1 member 2 (TAS1R2) from Gorilla gorilla gorilla (Western lowland gorilla).